A 340-amino-acid polypeptide reads, in one-letter code: tRNA N6-adenosine threonylcarbamoyltransferase (340 aa).

Fe cation is bound by residues histidine 111 and histidine 115. Residues 133-137 (VVSGG), aspartate 166, glycine 179, aspartate 183, and asparagine 274 each bind substrate. Aspartate 299 contacts Fe cation.

It belongs to the KAE1 / TsaD family. The cofactor is Fe(2+).

It is found in the cytoplasm. It carries out the reaction L-threonylcarbamoyladenylate + adenosine(37) in tRNA = N(6)-L-threonylcarbamoyladenosine(37) in tRNA + AMP + H(+). Its function is as follows. Required for the formation of a threonylcarbamoyl group on adenosine at position 37 (t(6)A37) in tRNAs that read codons beginning with adenine. Is involved in the transfer of the threonylcarbamoyl moiety of threonylcarbamoyl-AMP (TC-AMP) to the N6 group of A37, together with TsaE and TsaB. TsaD likely plays a direct catalytic role in this reaction. This chain is tRNA N6-adenosine threonylcarbamoyltransferase, found in Brachyspira hyodysenteriae (strain ATCC 49526 / WA1).